The sequence spans 159 residues: 3-hydroxyacyl-[acyl-carrier-protein] dehydratase FabZ (159 aa).

The active site involves histidine 58.

It belongs to the thioester dehydratase family. FabZ subfamily.

The protein localises to the cytoplasm. It catalyses the reaction a (3R)-hydroxyacyl-[ACP] = a (2E)-enoyl-[ACP] + H2O. Functionally, involved in unsaturated fatty acids biosynthesis. Catalyzes the dehydration of short chain beta-hydroxyacyl-ACPs and long chain saturated and unsaturated beta-hydroxyacyl-ACPs. This is 3-hydroxyacyl-[acyl-carrier-protein] dehydratase FabZ from Helicobacter pylori (strain ATCC 700392 / 26695) (Campylobacter pylori).